Here is a 920-residue protein sequence, read N- to C-terminus: Ubiquitin ligase-binding protein BUL2 (920 aa).

Polar residues predominate over residues 1–10; the sequence is MTFTFSTSSR. The tract at residues 1–89 is disordered; sequence MTFTFSTSSR…EENSLEMDCT (89 aa). Threonine 22 carries the phosphothreonine modification. Residues 35-57 show a composition bias toward polar residues; it reads QQLSSNSTDNSLHPNSGQTPRAS. Positions 73 to 82 are enriched in basic and acidic residues; it reads DRLRQEREEN. Residues 129–133 carry the PY-motif motif; sequence FPPSY. Serine 557 is subject to Phosphoserine.

Belongs to the BUL1 family. Component of the RSP5-BUL1/2 ubiquitin ligase complex composed of at least RSP5 and BUL1 or BUL2.

The protein localises to the cytoplasm. The protein operates within protein modification; protein ubiquitination. Component of a RSP5 ubiquitin ligase complex which specifies polyubiquitination and intracellular trafficking of the general amino acid permease GAP1 as well as other permeases such as PMA1. The RSP5-BUL1/2 complex is also necessary for the heat-shock element (HSE)-mediated gene expression, nitrogen starvation GLN3-dependent transcription and pressure-induced differential regulation of the 2 tryptophan permeases TAT1 and TAT2. This Saccharomyces cerevisiae (strain ATCC 204508 / S288c) (Baker's yeast) protein is Ubiquitin ligase-binding protein BUL2 (BUL2).